A 360-amino-acid chain; its full sequence is Photosystem II protein D1 (360 aa).

3 consecutive transmembrane segments (helical) span residues Tyr29–Ser46, His118–Leu133, and Trp142–Ala156. His118 contacts chlorophyll a. A pheophytin a-binding site is contributed by Tyr126. Residues Asp170 and Glu189 each coordinate [CaMn4O5] cluster. The helical transmembrane segment at Phe197–Leu218 threads the bilayer. His198 contacts chlorophyll a. Residues His215 and Ser264 to Phe265 contribute to the a quinone site. Position 215 (His215) interacts with Fe cation. His272 is a Fe cation binding site. The chain crosses the membrane as a helical span at residues Phe274 to Met288. [CaMn4O5] cluster-binding residues include His332, Glu333, Asp342, and Ala344. The propeptide occupies Ser345–Gly360.

The protein belongs to the reaction center PufL/M/PsbA/D family. PSII is composed of 1 copy each of membrane proteins PsbA, PsbB, PsbC, PsbD, PsbE, PsbF, PsbH, PsbI, PsbJ, PsbK, PsbL, PsbM, PsbT, PsbX, PsbY, PsbZ, Psb30/Ycf12, at least 3 peripheral proteins of the oxygen-evolving complex and a large number of cofactors. It forms dimeric complexes. The D1/D2 heterodimer binds P680, chlorophylls that are the primary electron donor of PSII, and subsequent electron acceptors. It shares a non-heme iron and each subunit binds pheophytin, quinone, additional chlorophylls, carotenoids and lipids. D1 provides most of the ligands for the Mn4-Ca-O5 cluster of the oxygen-evolving complex (OEC). There is also a Cl(-1) ion associated with D1 and D2, which is required for oxygen evolution. The PSII complex binds additional chlorophylls, carotenoids and specific lipids. is required as a cofactor. In terms of processing, tyr-161 forms a radical intermediate that is referred to as redox-active TyrZ, YZ or Y-Z. Post-translationally, C-terminally processed by CTPA; processing is essential to allow assembly of the oxygen-evolving complex and thus photosynthetic growth.

The protein resides in the plastid. It is found in the chloroplast thylakoid membrane. The catalysed reaction is 2 a plastoquinone + 4 hnu + 2 H2O = 2 a plastoquinol + O2. In terms of biological role, photosystem II (PSII) is a light-driven water:plastoquinone oxidoreductase that uses light energy to abstract electrons from H(2)O, generating O(2) and a proton gradient subsequently used for ATP formation. It consists of a core antenna complex that captures photons, and an electron transfer chain that converts photonic excitation into a charge separation. The D1/D2 (PsbA/PsbD) reaction center heterodimer binds P680, the primary electron donor of PSII as well as several subsequent electron acceptors. The protein is Photosystem II protein D1 of Gracilaria tenuistipitata var. liui (Red alga).